The following is a 96-amino-acid chain: ATP synthase subunit c (96 aa).

A run of 2 helical transmembrane segments spans residues 9 to 29 and 58 to 78; these read FIACVTAAGFGIAIAAFGCGI and IGLAMIESLCIYALVVALILI.

This sequence belongs to the ATPase C chain family. As to quaternary structure, F-type ATPases have 2 components, F(1) - the catalytic core - and F(0) - the membrane proton channel. F(1) has five subunits: alpha(3), beta(3), gamma(1), delta(1), epsilon(1). F(0) has three main subunits: a(1), b(2) and c(10-14). The alpha and beta chains form an alternating ring which encloses part of the gamma chain. F(1) is attached to F(0) by a central stalk formed by the gamma and epsilon chains, while a peripheral stalk is formed by the delta and b chains.

The protein resides in the cell inner membrane. Its function is as follows. F(1)F(0) ATP synthase produces ATP from ADP in the presence of a proton or sodium gradient. F-type ATPases consist of two structural domains, F(1) containing the extramembraneous catalytic core and F(0) containing the membrane proton channel, linked together by a central stalk and a peripheral stalk. During catalysis, ATP synthesis in the catalytic domain of F(1) is coupled via a rotary mechanism of the central stalk subunits to proton translocation. Key component of the F(0) channel; it plays a direct role in translocation across the membrane. A homomeric c-ring of between 10-14 subunits forms the central stalk rotor element with the F(1) delta and epsilon subunits. The polypeptide is ATP synthase subunit c (Desulfosudis oleivorans (strain DSM 6200 / JCM 39069 / Hxd3) (Desulfococcus oleovorans)).